A 355-amino-acid polypeptide reads, in one-letter code: NADH dehydrogenase [ubiquinone] 1 alpha subcomplex subunit 10, mitochondrial (355 aa).

The N-terminal 35 residues, 1–35, are a transit peptide targeting the mitochondrion; that stretch reads MALRLLRLVPASAPARGLAAGAQRVGRIHTSVHCK. The residue at position 122 (Lys-122) is an N6-acetyllysine; alternate. Lys-122 is subject to N6-succinyllysine; alternate. Ser-250 is modified (phosphoserine; by PINK1). Lys-285 is modified (N6-succinyllysine).

Belongs to the complex I NDUFA10 subunit family. Complex I is composed of 45 different subunits. This a component of the hydrophobic protein fraction. Requires FAD as cofactor. Post-translationally, phosphorylation at Ser-250 by PINK1 is required for the binding and/or reduction of the complex I substrate ubiquinone. In terms of processing, acetylation of Lys-242 is observed in liver mitochondria from fasted mice but not from fed mice.

Its subcellular location is the mitochondrion matrix. In terms of biological role, accessory subunit of the mitochondrial membrane respiratory chain NADH dehydrogenase (Complex I), that is believed not to be involved in catalysis. Complex I functions in the transfer of electrons from NADH to the respiratory chain. The immediate electron acceptor for the enzyme is believed to be ubiquinone. This is NADH dehydrogenase [ubiquinone] 1 alpha subcomplex subunit 10, mitochondrial (Ndufa10) from Mus musculus (Mouse).